Reading from the N-terminus, the 274-residue chain is Ribosomal RNA small subunit methyltransferase A (274 aa).

S-adenosyl-L-methionine is bound by residues H15, L17, G42, E64, D89, and N109.

Belongs to the class I-like SAM-binding methyltransferase superfamily. rRNA adenine N(6)-methyltransferase family. RsmA subfamily.

It localises to the cytoplasm. The enzyme catalyses adenosine(1518)/adenosine(1519) in 16S rRNA + 4 S-adenosyl-L-methionine = N(6)-dimethyladenosine(1518)/N(6)-dimethyladenosine(1519) in 16S rRNA + 4 S-adenosyl-L-homocysteine + 4 H(+). In terms of biological role, specifically dimethylates two adjacent adenosines (A1518 and A1519) in the loop of a conserved hairpin near the 3'-end of 16S rRNA in the 30S particle. May play a critical role in biogenesis of 30S subunits. The chain is Ribosomal RNA small subunit methyltransferase A from Synechococcus sp. (strain RCC307).